Consider the following 1068-residue polypeptide: WD repeat-containing protein on Y chromosome (1068 aa).

WD repeat units lie at residues 155–199 (DEVT…IRTA), 201–242 (SESI…RGPF), 322–361 (RIPL…EPSA), 365–404 (GHNG…LLQT), 455–494 (THAA…RKII), 507–546 (IIDI…VVRN), and 594–634 (FHTD…RRYS). Residues 657-687 (SKRLASRPTPGNHGLQMGRAGRSTVLNRPED) form a disordered region. 2 WD repeats span residues 746–785 (KTGD…VPET) and 829–868 (GHLK…LGTL). Residues 1026–1068 (SAINIKQPSRRRSDKTNDTRNVRTPRARDLIALEMSSSHASQS) form a disordered region. Basic and acidic residues predominate over residues 1039–1056 (DKTNDTRNVRTPRARDLI).

The protein is WD repeat-containing protein on Y chromosome of Drosophila yakuba (Fruit fly).